We begin with the raw amino-acid sequence, 513 residues long: Histidine ammonia-lyase (513 aa).

A cross-link (5-imidazolinone (Ala-Gly)) is located at residues 144–146 (ASG). Ser145 is modified (2,3-didehydroalanine (Ser)).

This sequence belongs to the PAL/histidase family. In terms of processing, contains an active site 4-methylidene-imidazol-5-one (MIO), which is formed autocatalytically by cyclization and dehydration of residues Ala-Ser-Gly.

The protein localises to the cytoplasm. It carries out the reaction L-histidine = trans-urocanate + NH4(+). Its pathway is amino-acid degradation; L-histidine degradation into L-glutamate; N-formimidoyl-L-glutamate from L-histidine: step 1/3. This chain is Histidine ammonia-lyase, found in Streptococcus pyogenes serotype M3 (strain ATCC BAA-595 / MGAS315).